The primary structure comprises 377 residues: Endoplasmic reticulum-Golgi intermediate compartment protein 2 (377 aa).

At 1-33 (MRRLNRRKTLSLVKELDAFPKVPDSYVETSASG) the chain is on the cytoplasmic side. A helical membrane pass occupies residues 34-54 (GTVSLIAFTTMALLTIMEFSV). The Lumenal segment spans residues 55-319 (YQDTWMKYEY…PFWQFFVRLC (265 aa)). The helical transmembrane segment at 320–340 (GIIGGIFSTTGMLHGIGKFIV) threads the bilayer. Over 341–377 (EIICCRFRLGSYKPVRSVPFADGHTDNHLPLLENNTH) the chain is Cytoplasmic.

The protein belongs to the ERGIC family. In terms of assembly, may form a heteromeric complex composed of ERGIC1, ERGIC2 and ERGIC3. Interacts with ERGIC3, the interaction is required for the stable expression of both proteins. May interact with EEF1A1.

Its subcellular location is the endoplasmic reticulum-Golgi intermediate compartment membrane. The protein localises to the golgi apparatus. It localises to the cis-Golgi network membrane. The protein resides in the endoplasmic reticulum membrane. It is found in the cytoplasm. Its subcellular location is the nucleus. In terms of biological role, possible role in transport between endoplasmic reticulum and Golgi. The protein is Endoplasmic reticulum-Golgi intermediate compartment protein 2 (Ergic2) of Mus musculus (Mouse).